Consider the following 558-residue polypeptide: FRIGIDA-like protein 3 (558 aa).

Residues 9–102 (SLMDSTSSKI…ALERLQKKRD (94 aa)) adopt a coiled-coil conformation. The span at 454-463 (AKADKKRATE) shows a compositional bias: basic and acidic residues. Residues 454-494 (AKADKKRATEPMKPQPKRPRGAQPRVTDNNNNINNNKTGYG) form a disordered region.

The protein belongs to the Frigida family.

The protein is FRIGIDA-like protein 3 (FRL3) of Arabidopsis thaliana (Mouse-ear cress).